Consider the following 97-residue polypeptide: MLKMNLANLQLFAHKKGGGSTSNGRDSQAKRLGAKAADGQTVTGGSILFRQRGTHIYPGVNVGRGGDDTLFAKVEGVVRFERKGRDKRQVSVYPVAK.

The propeptide occupies 1 to 12; sequence MLKMNLANLQLF. The segment at 14–37 is disordered; it reads HKKGGGSTSNGRDSQAKRLGAKAA.

Belongs to the bacterial ribosomal protein bL27 family. In terms of processing, the N-terminus is cleaved by ribosomal processing cysteine protease Prp.

The polypeptide is Large ribosomal subunit protein bL27 (Streptococcus uberis (strain ATCC BAA-854 / 0140J)).